The sequence spans 333 residues: Holliday junction branch migration complex subunit RuvB (333 aa).

The tract at residues 1–181 (MARILDNDLL…FGINGHMEYY (181 aa)) is large ATPase domain (RuvB-L). ATP contacts are provided by residues Leu-20, Arg-21, Gly-62, Lys-65, Thr-66, Thr-67, 128–130 (EDY), Arg-171, Tyr-181, and Arg-218. A Mg(2+)-binding site is contributed by Thr-66. The segment at 130-148 (YYIDIMIGAGETSRSVHLD) is presensor-1 beta-hairpin. A small ATPAse domain (RuvB-S) region spans residues 182–252 (ELPDLTEIVE…IADQALTMLD (71 aa)). Residues 255–333 (HEGLDYVDQK…HMGYDYTRDN (79 aa)) are head domain (RuvB-H). Positions 291, 310, 312, and 315 each coordinate DNA.

This sequence belongs to the RuvB family. As to quaternary structure, homohexamer. Forms an RuvA(8)-RuvB(12)-Holliday junction (HJ) complex. HJ DNA is sandwiched between 2 RuvA tetramers; dsDNA enters through RuvA and exits via RuvB. Only 4 subunits contact one DNA strand at any time. Two adjacent subunits are contacted by domain III of RuvA. An RuvB hexamer assembles on each DNA strand where it exits the tetramer. Each RuvB hexamer is contacted by two RuvA subunits (via domain III) on 2 adjacent RuvB subunits; this complex drives branch migration. In the full resolvosome a probable DNA-RuvA(4)-RuvB(12)-RuvC(2) complex forms which resolves the HJ.

The protein localises to the cytoplasm. The catalysed reaction is ATP + H2O = ADP + phosphate + H(+). With respect to regulation, binding of domain III of RuvA to a single subunit of the RuvB hexamer activates the ATPase 2 subunits away and nucleotide exchange in the adjacent subunit. Its function is as follows. The RuvA-RuvB-RuvC complex processes Holliday junction (HJ) DNA during genetic recombination and DNA repair, while the RuvA-RuvB complex plays an important role in the rescue of blocked DNA replication forks via replication fork reversal (RFR). Catalyzes branch migration on Holliday junction (HJ) DNA in complex with RuvA from S.typhimurim and ATP. RuvA specifically binds to HJ cruciform DNA, conferring on it an open structure. The RuvB hexamer acts as an ATP-dependent pump, pulling dsDNA into and through the RuvAB complex. Forms 2 homohexamers on either side of HJ DNA bound by 1 or 2 RuvA tetramers; 4 subunits per hexamer contact DNA at a time. Coordinated motions by a converter formed by DNA-disengaged RuvB subunits stimulates ATP hydrolysis and nucleotide exchange. Immobilization of the converter enables RuvB to convert the ATP-contained energy into a lever motion, pulling 2 nucleotides of DNA out of the RuvA tetramer per ATP hydrolyzed, thus driving DNA branch migration. The RuvB motors rotate together with the DNA substrate, which together with the progressing nucleotide cycle forms the mechanistic basis for DNA recombination by continuous branch migration. Branch migration allows RuvC to scan DNA until it finds its consensus sequence, where it cleaves and resolves cruciform DNA. The chain is Holliday junction branch migration complex subunit RuvB from Streptococcus thermophilus (strain ATCC BAA-250 / LMG 18311).